We begin with the raw amino-acid sequence, 118 residues long: Myotrophin (118 aa).

N-acetylcysteine is present on Cys2. The ANK 1 repeat unit spans residues 2–30; sequence CDKEFMWALKNGDLDEVKDYVAKGEDVNR. Lys4, Lys11, and Lys24 each carry N6-acetyllysine. Thr31 is modified (phosphothreonine). ANK repeat units lie at residues 34–66 and 67–99; these read GGRK…APDK and HHIT…VKGP.

This sequence belongs to the myotrophin family. As to quaternary structure, interacts with the heterodimer formed by CAPZA1 and CAPZB. Interacts with RELA.

It is found in the cytoplasm. The protein resides in the nucleus. It localises to the perinuclear region. Plays a role in the regulation of the growth of actin filaments. Inhibits the activity of the F-actin-capping protein complex formed by the CAPZA1 and CAPZB heterodimer. Promotes dimerization of NF-kappa-B subunits and regulates NF-kappa-B transcription factor activity. Promotes growth of cardiomyocytes, but not cardiomyocyte proliferation. Promotes cardiac muscle hypertrophy. In Rattus norvegicus (Rat), this protein is Myotrophin (Mtpn).